Here is a 391-residue protein sequence, read N- to C-terminus: mRNA-capping enzyme subunit alpha (391 aa).

The active-site N6-GMP-lysine intermediate is Lys63. A disordered region spans residues 363–391 (KERNRRPRDEDRKRVGGDDHDHGAKRARQ).

Belongs to the eukaryotic GTase family. In terms of assembly, heterodimer. The mRNA-capping enzyme is composed of two separate chains alpha and beta, respectively a mRNA guanylyltransferase and an mRNA 5'-triphosphate monophosphatase.

The protein resides in the nucleus. It catalyses the reaction a 5'-end diphospho-ribonucleoside in mRNA + GTP + H(+) = a 5'-end (5'-triphosphoguanosine)-ribonucleoside in mRNA + diphosphate. Its function is as follows. Second step of mRNA capping. Transfer of the GMP moiety of GTP to the 5'-end of RNA via an enzyme-GMP covalent reaction intermediate. The sequence is that of mRNA-capping enzyme subunit alpha (CEG1) from Yarrowia lipolytica (strain CLIB 122 / E 150) (Yeast).